Consider the following 435-residue polypeptide: ATP-dependent protease ATPase subunit HslU (435 aa).

Residues valine 18, 60–65 (GVGKTE), aspartate 248, glutamate 313, and arginine 385 contribute to the ATP site.

It belongs to the ClpX chaperone family. HslU subfamily. As to quaternary structure, a double ring-shaped homohexamer of HslV is capped on each side by a ring-shaped HslU homohexamer. The assembly of the HslU/HslV complex is dependent on binding of ATP.

The protein localises to the cytoplasm. In terms of biological role, ATPase subunit of a proteasome-like degradation complex; this subunit has chaperone activity. The binding of ATP and its subsequent hydrolysis by HslU are essential for unfolding of protein substrates subsequently hydrolyzed by HslV. HslU recognizes the N-terminal part of its protein substrates and unfolds these before they are guided to HslV for hydrolysis. This is ATP-dependent protease ATPase subunit HslU from Azorhizobium caulinodans (strain ATCC 43989 / DSM 5975 / JCM 20966 / LMG 6465 / NBRC 14845 / NCIMB 13405 / ORS 571).